The primary structure comprises 490 residues: NADP-reducing hydrogenase subunit HndC (490 aa).

4Fe-4S ferredoxin-type domains follow at residues 433–462 (LTYT…GTKK) and 463–490 (QPHT…IIKQ).

The protein belongs to the complex I 51 kDa subunit family. Heterotetramer composed of HndA, HndB, HndC and HndD subunits. HndC is probably the reducing subunit.

The catalysed reaction is H2 + NADP(+) = NADPH + H(+). Its activity is regulated as follows. Inhibited by oxygen. Functionally, catalyzes the reduction of NADP in the presence of molecular H2 to yield NADPH. The chain is NADP-reducing hydrogenase subunit HndC (hndC) from Solidesulfovibrio fructosivorans (Desulfovibrio fructosivorans).